The following is a 285-amino-acid chain: Bifunctional protein FolD (285 aa).

NADP(+) is bound by residues 165–167 (GAS) and Ser190.

It belongs to the tetrahydrofolate dehydrogenase/cyclohydrolase family. In terms of assembly, homodimer.

The enzyme catalyses (6R)-5,10-methylene-5,6,7,8-tetrahydrofolate + NADP(+) = (6R)-5,10-methenyltetrahydrofolate + NADPH. It catalyses the reaction (6R)-5,10-methenyltetrahydrofolate + H2O = (6R)-10-formyltetrahydrofolate + H(+). The protein operates within one-carbon metabolism; tetrahydrofolate interconversion. Functionally, catalyzes the oxidation of 5,10-methylenetetrahydrofolate to 5,10-methenyltetrahydrofolate and then the hydrolysis of 5,10-methenyltetrahydrofolate to 10-formyltetrahydrofolate. The chain is Bifunctional protein FolD from Cupriavidus metallidurans (strain ATCC 43123 / DSM 2839 / NBRC 102507 / CH34) (Ralstonia metallidurans).